A 453-amino-acid chain; its full sequence is C4-dicarboxylate TRAP transporter large permease protein DctM (453 aa).

Transmembrane regions (helical) follow at residues 2 to 22, 50 to 70, 82 to 102, 104 to 124, 139 to 159, 172 to 192, 217 to 237, 243 to 263, 289 to 309, 326 to 346, 356 to 376, 380 to 400, and 417 to 437; these read AVALLFILVIGMMIVGVPIAI, AFAGHYTLLAIPFFILASTFM, FAIAMVGWFRGGLAIASVVAC, MFAALSGSSPATVVAIGSIVI, GVICNAGTLGILIPPSIVMVV, FLGGVVPGLLAGLMLIIAIYI, ASWGLLLVVIILGGIYGGIFT, AVAAVYSFFIANFIYRDMGPF, LYDAGKLTIMLMFIIANALIL, MLSAGLGPITFLIVVNLILLV, LLVIVAPLVFPIAIALGIDPI, IMMVVNMEIGMITPPVGLNLF, and ALPWVGVMFLFLIIVTYVPWV.

It belongs to the TRAP transporter large permease family. The complex comprises the extracytoplasmic solute receptor protein DctP, and the two transmembrane proteins DctQ and DctM.

It is found in the cell inner membrane. Functionally, part of the tripartite ATP-independent periplasmic (TRAP) transport system DctPQM involved in C4-dicarboxylates uptake. The protein is C4-dicarboxylate TRAP transporter large permease protein DctM of Vibrio cholerae serotype O1 (strain ATCC 39315 / El Tor Inaba N16961).